Reading from the N-terminus, the 573-residue chain is Membrane protein insertase YidC (573 aa).

6 helical membrane-spanning segments follow: residues 6 to 26, 355 to 375, 379 to 399, 446 to 466, 488 to 508, and 524 to 544; these read VFLI…WGKD, FSIM…LHSF, WGWA…PLSA, GGCL…WVLV, PYFI…KLTP, and PLVF…YWVV.

It belongs to the OXA1/ALB3/YidC family. Type 1 subfamily. In terms of assembly, interacts with the Sec translocase complex via SecD. Specifically interacts with transmembrane segments of nascent integral membrane proteins during membrane integration.

The protein localises to the cell inner membrane. In terms of biological role, required for the insertion and/or proper folding and/or complex formation of integral membrane proteins into the membrane. Involved in integration of membrane proteins that insert both dependently and independently of the Sec translocase complex, as well as at least some lipoproteins. Aids folding of multispanning membrane proteins. In Xanthomonas campestris pv. campestris (strain ATCC 33913 / DSM 3586 / NCPPB 528 / LMG 568 / P 25), this protein is Membrane protein insertase YidC.